A 274-amino-acid polypeptide reads, in one-letter code: Protein TIFY 11A (274 aa).

Disordered stretches follow at residues Ser-49 to Gly-95 and Pro-139 to Asn-176. One can recognise a Tify domain in the interval Ser-92–Gln-127. Positions Pro-139–Ser-150 are enriched in polar residues. Residues Asp-161–Arg-185 are a coiled coil. The short motif at Ile-182 to Gln-206 is the Jas element. Positions Ala-183–Arg-190 match the Nuclear localization signal motif. The interval Gln-206–Leu-274 is disordered. Basic and acidic residues predominate over residues Ile-249–Leu-274.

The protein belongs to the TIFY/JAZ family. In terms of assembly, homo- and heterodimer. Interacts with MYC2, MYC3, MYC4, AFPH2/NINJA, TIFY10A/JAZ1, TIFY10B/JAZ2, TIFY11B/JAZ6, TIFY5A/JAZ8 and TIFY3B/JAZ12. As to quaternary structure, (Microbial infection) Interacts with the pathogenic Pseudomonas syringae HopZ1a protein. Post-translationally, (Microbial infection) Acetylated by Pseudomonas syringae HopZ1a. Ubiquitinated. Targeted for degradation by the SCF(COI1) E3 ubiquitin ligase-proteasome pathway during jasmonate signaling.

The protein resides in the nucleus. Repressor of jasmonate responses. This Arabidopsis thaliana (Mouse-ear cress) protein is Protein TIFY 11A.